The primary structure comprises 72 residues: Translation initiation factor IF-1 (72 aa).

The S1-like domain occupies 1-72 (MAKEETIQMQ…SRARITFRAK (72 aa)).

The protein belongs to the IF-1 family. As to quaternary structure, component of the 30S ribosomal translation pre-initiation complex which assembles on the 30S ribosome in the order IF-2 and IF-3, IF-1 and N-formylmethionyl-tRNA(fMet); mRNA recruitment can occur at any time during PIC assembly.

Its subcellular location is the cytoplasm. Its function is as follows. One of the essential components for the initiation of protein synthesis. Stabilizes the binding of IF-2 and IF-3 on the 30S subunit to which N-formylmethionyl-tRNA(fMet) subsequently binds. Helps modulate mRNA selection, yielding the 30S pre-initiation complex (PIC). Upon addition of the 50S ribosomal subunit IF-1, IF-2 and IF-3 are released leaving the mature 70S translation initiation complex. The sequence is that of Translation initiation factor IF-1 from Nitrosospira multiformis (strain ATCC 25196 / NCIMB 11849 / C 71).